A 166-amino-acid chain; its full sequence is NAD(P)H-quinone oxidoreductase subunit I, chloroplastic (166 aa).

2 consecutive 4Fe-4S ferredoxin-type domains span residues 55–84 (GRIH…VDWK) and 95–124 (LNYS…MTEE). Residues cysteine 64, cysteine 67, cysteine 70, cysteine 74, cysteine 104, cysteine 107, cysteine 110, and cysteine 114 each coordinate [4Fe-4S] cluster.

This sequence belongs to the complex I 23 kDa subunit family. As to quaternary structure, NDH is composed of at least 16 different subunits, 5 of which are encoded in the nucleus. [4Fe-4S] cluster is required as a cofactor.

It is found in the plastid. The protein resides in the chloroplast thylakoid membrane. The enzyme catalyses a plastoquinone + NADH + (n+1) H(+)(in) = a plastoquinol + NAD(+) + n H(+)(out). It catalyses the reaction a plastoquinone + NADPH + (n+1) H(+)(in) = a plastoquinol + NADP(+) + n H(+)(out). Functionally, NDH shuttles electrons from NAD(P)H:plastoquinone, via FMN and iron-sulfur (Fe-S) centers, to quinones in the photosynthetic chain and possibly in a chloroplast respiratory chain. The immediate electron acceptor for the enzyme in this species is believed to be plastoquinone. Couples the redox reaction to proton translocation, and thus conserves the redox energy in a proton gradient. The polypeptide is NAD(P)H-quinone oxidoreductase subunit I, chloroplastic (Tridax balbisioides (Coatbuttons)).